Here is a 261-residue protein sequence, read N- to C-terminus: Putative ankyrin repeat protein L99 (261 aa).

ANK repeat units follow at residues 21–50 (KVNP…DVHA), 51–80 (HEDY…NIHS), 81–110 (DRDL…NVNA), 112–140 (QNSA…NIHA), 142–170 (NNFC…DINA), 171–203 (DNGA…IDNC), and 231–259 (NELK…NINS).

The protein is Putative ankyrin repeat protein L99 of Acanthamoeba polyphaga (Amoeba).